The sequence spans 453 residues: MREVISIHIGQAGVQVGNACWELYCLEHGIQPDGLMPSSKTIGVEDDAFNTFFSETGAGKHVPRAVFLDLEPTVVDEVRTGTYRQLFHPEQLITGKEDAANNYARGHYTIGKEIVDLCLDRIRKLADNCTGLQGFLVFSSVGGGTGSGLGALLLERLSVDYGKKSKLGFTVYPSPQVATAVVEPYNSVLSTHALLEHTDVAVMLDNEAIYDICRRSLDIQRPTYTNLNRLIAQVISSLTASLRFDGALNVDVTEFQTNLVPYPRIHFMLCSYAPVISAEKAYHEQLSVAEITNSAFEPASMMAKCDPRHGKYMACCLMYRGDVVPKDVNAAVATIKTKRTIQFVDWSPTGFKCGINYQPPTVVPGGDLAKVQRAVCMISNSTAIAEVFSRIDHKFDLMYAKRAFVHWYVGEGMEEGEFSEAREDLAALEKDYEEVGTESQEGDGEEGEDGGDQ.

Position 11 (Gln-11) interacts with GTP. N6-acetyllysine is present on Lys-40. GTP is bound by residues Glu-71, Ser-140, Gly-144, Thr-145, Thr-179, Asn-206, and Asn-228. Residue Glu-71 participates in Mg(2+) binding. Glu-254 is an active-site residue. Residues 429–453 form a disordered region; that stretch reads EKDYEEVGTESQEGDGEEGEDGGDQ. Over residues 431–453 the composition is skewed to acidic residues; it reads DYEEVGTESQEGDGEEGEDGGDQ.

This sequence belongs to the tubulin family. As to quaternary structure, dimer of alpha and beta chains. A typical microtubule is a hollow water-filled tube with an outer diameter of 25 nm and an inner diameter of 15 nM. Alpha-beta heterodimers associate head-to-tail to form protofilaments running lengthwise along the microtubule wall with the beta-tubulin subunit facing the microtubule plus end conferring a structural polarity. Microtubules usually have 13 protofilaments but different protofilament numbers can be found in some organisms and specialized cells. Mg(2+) serves as cofactor. Post-translationally, acetylation of alpha chains at Lys-40 stabilizes microtubules and affects affinity and processivity of microtubule motors. This modification has a role in multiple cellular functions, ranging from cell motility, cell cycle progression or cell differentiation to intracellular trafficking and signaling.

It localises to the cytoplasm. It is found in the cytoskeleton. It carries out the reaction GTP + H2O = GDP + phosphate + H(+). In terms of biological role, tubulin is the major constituent of microtubules, a cylinder consisting of laterally associated linear protofilaments composed of alpha- and beta-tubulin heterodimers. Microtubules grow by the addition of GTP-tubulin dimers to the microtubule end, where a stabilizing cap forms. Below the cap, tubulin dimers are in GDP-bound state, owing to GTPase activity of alpha-tubulin. This is Tubulin alpha-13 chain (TUBA13) from Naegleria pringsheimi (Amoeba).